A 1563-amino-acid chain; its full sequence is Superkiller complex protein 3 (1563 aa).

Ser2 bears the N-acetylserine mark. TPR repeat units follow at residues 6–39 (VKTALKSARDAIRNKEYKEALKHCKTVLKQEKNN), 40–73 (YNAWVFIGVAAAELEQPDQAQGAYKKAAELEPEQ), 157–196 (YELWRKLSQLLAENIEDQNNETQQMLLTAFENALDLADNI), 272–305 (GPGLIGLGIIALQDKKYEDAVRHLTEGLKESPVC), 307–339 (AGWCHLAEAQVKMHRPKEAILSCNQALKTIDNF), 386–419 (PGLLVLQGLACLNTGAVDKATKIMEDLVTSYPDL), 420–453 (AEAHALEGRVHFTKKDYVQAEVSFQRALEKDAEV), 455–492 (EYHYQLGLTYWFMGEETRKDKTKALTHFLKAARLDAHM), 493–527 (GKVFCYLGHYYRDVAGDRNRARGCYRKAFELDDND), 564–597 (KWAWLRRGLYHLKAGQHSQAVADLQAALRADPKD), 598–631 (CNCWESLGEAYLSRGGYTTALKSFMKASELNPDS), 632–665 (TYSVFKVAAIQQILGRYSEAIAQYQLIIKMKEDY), 633–665 (YSVFKVAAIQQILGRYSEAIAQYQLIIKMKEDY), 673–713 (GECH…RADV), 790–824 (VQHLAETGSSMSDLTELLEKSLHCLKKAVRLDSNN), 826–860 (LHWNALGVVACYRGVGNYALAQHCFIKSIQAEQIN), 861–894 (AAAWTNLGVLYLATENIEQAHEAFKMAQSLDPSY), 980–1013 (ASAFTMLGYLNEHLQLKKEAAEAYQRATTLLHSA), 1020–1053 (NVAVRNWGRLLCSIGDYDRAIQAFKSTPLVELED), 1055–1084 (IGFALALFMKGLYKESGSAYERALAVCKSE), 1325–1358 (KWSFSQVVTGLIDTGKTSEAESLCTQSLKSNPDQ), and 1399–1432 (VPAWQWLAQVYQSQGMMGAAEMCYRKSLQVASQQ).

This sequence belongs to the SKI3 family. In terms of assembly, component of the SKI complex which consists of SKIC2, SKIC3 and SKIC8. Interacts with PAF1.

The protein localises to the cytoplasm. Its subcellular location is the nucleus. Component of the SKI complex, a multiprotein complex that assists the RNA-degrading exosome during the mRNA decay and quality-control pathways. The SKI complex catalyzes mRNA extraction from 80S ribosomal complexes in the 3'-5' direction and channels mRNA to the cytosolic exosome for degradation. SKI-mediated extraction of mRNA from stalled ribosomes allow binding of the Pelota-HBS1L complex and subsequent ribosome disassembly by ABCE1 for ribosome recycling. In the nucleus, the SKI complex associates with transcriptionally active genes in a manner dependent on PAF1 complex (PAF1C). The protein is Superkiller complex protein 3 of Mus musculus (Mouse).